Here is a 312-residue protein sequence, read N- to C-terminus: tRNA U34 carboxymethyltransferase (312 aa).

Residues lysine 88, tryptophan 102, lysine 107, glycine 127, 149 to 151 (DPS), 177 to 178 (LD), methionine 191, tyrosine 195, and arginine 304 contribute to the carboxy-S-adenosyl-L-methionine site.

This sequence belongs to the class I-like SAM-binding methyltransferase superfamily. CmoB family. Homotetramer.

It carries out the reaction carboxy-S-adenosyl-L-methionine + 5-hydroxyuridine(34) in tRNA = 5-carboxymethoxyuridine(34) in tRNA + S-adenosyl-L-homocysteine + H(+). Catalyzes carboxymethyl transfer from carboxy-S-adenosyl-L-methionine (Cx-SAM) to 5-hydroxyuridine (ho5U) to form 5-carboxymethoxyuridine (cmo5U) at position 34 in tRNAs. In Dichelobacter nodosus (strain VCS1703A), this protein is tRNA U34 carboxymethyltransferase.